A 172-amino-acid polypeptide reads, in one-letter code: Sec-independent protein translocase protein TatB (172 aa).

The chain crosses the membrane as a helical span at residues 1 to 21 (MFDIGWSELLVIGVVALIAIG).

The protein belongs to the TatB family. In terms of assembly, the Tat system comprises two distinct complexes: a TatABC complex, containing multiple copies of TatA, TatB and TatC subunits, and a separate TatA complex, containing only TatA subunits. Substrates initially bind to the TatABC complex, which probably triggers association of the separate TatA complex to form the active translocon.

It is found in the cell inner membrane. Functionally, part of the twin-arginine translocation (Tat) system that transports large folded proteins containing a characteristic twin-arginine motif in their signal peptide across membranes. Together with TatC, TatB is part of a receptor directly interacting with Tat signal peptides. TatB may form an oligomeric binding site that transiently accommodates folded Tat precursor proteins before their translocation. The polypeptide is Sec-independent protein translocase protein TatB (Rhodopseudomonas palustris (strain BisB18)).